The primary structure comprises 468 residues: Malate-2H(+)/Na(+)-lactate antiporter (468 aa).

A run of 12 helical transmembrane segments spans residues 9-29, 30-50, 73-93, 96-116, 136-156, 192-212, 233-253, 258-278, 309-329, 357-377, 405-425, and 428-448; these read LFEI…FTVF, LDLP…LLGI, AVLI…GGVV, LIYY…TLII, IAMI…AGAI, LYLS…VGFM, TFDI…LLAM, MPVI…FQGM, IVGM…GGLL, LIVA…LILT, LTSG…ILGV, and FSYL…IIYG.

It belongs to the NhaC Na(+)/H(+) (TC 2.A.35) antiporter family.

Its subcellular location is the cell membrane. Functionally, couples proton uptake and Na(+) efflux to the substrate-product malate/lactate antiport, in an electroneutral malate-2H(+)/Na(+)-lactate exchange. Plays a role in supporting growth to high density on malate at reduced protonmotive force. The chain is Malate-2H(+)/Na(+)-lactate antiporter (mleN) from Bacillus subtilis (strain 168).